The following is a 276-amino-acid chain: Small ribosomal subunit protein uS3 (276 aa).

The KH type-2 domain occupies 39 to 110 (IRRETMKFLK…KINIKIKEIK (72 aa)).

The protein belongs to the universal ribosomal protein uS3 family. Part of the 30S ribosomal subunit. Forms a tight complex with proteins S10 and S14.

Functionally, binds the lower part of the 30S subunit head. Binds mRNA in the 70S ribosome, positioning it for translation. The protein is Small ribosomal subunit protein uS3 of Borrelia turicatae (strain 91E135).